The primary structure comprises 398 residues: Membrane-spanning 4-domains subfamily A member 18 (398 aa).

The next 4 helical transmembrane spans lie at 156–176, 178–198, 218–238, and 251–271; these read LGAIQILIGLTHIFSAINPVL, YYPFVTWLSGYPLWGGLSYIV, SISFNIISALFAFAGIFIIIT, and AVSGGLLPFALLEFILTCVVS. The disordered stretch occupies residues 316–346; it reads TGPVSATNGPVNTTIHPVNTTTSPVNTTTSP. The segment covering 319-331 has biased composition (polar residues); sequence VSATNGPVNTTIH. Positions 332-346 are enriched in low complexity; it reads PVNTTTSPVNTTTSP.

The protein belongs to the MS4A family.

The protein resides in the membrane. In Homo sapiens (Human), this protein is Membrane-spanning 4-domains subfamily A member 18 (MS4A18).